Consider the following 148-residue polypeptide: SsrA-binding protein (148 aa).

It belongs to the SmpB family.

The protein resides in the cytoplasm. Required for rescue of stalled ribosomes mediated by trans-translation. Binds to transfer-messenger RNA (tmRNA), required for stable association of tmRNA with ribosomes. tmRNA and SmpB together mimic tRNA shape, replacing the anticodon stem-loop with SmpB. tmRNA is encoded by the ssrA gene; the 2 termini fold to resemble tRNA(Ala) and it encodes a 'tag peptide', a short internal open reading frame. During trans-translation Ala-aminoacylated tmRNA acts like a tRNA, entering the A-site of stalled ribosomes, displacing the stalled mRNA. The ribosome then switches to translate the ORF on the tmRNA; the nascent peptide is terminated with the 'tag peptide' encoded by the tmRNA and targeted for degradation. The ribosome is freed to recommence translation, which seems to be the essential function of trans-translation. The chain is SsrA-binding protein from Azoarcus sp. (strain BH72).